The chain runs to 323 residues: MSAVCGGAARMLRTPGRHGYAAEFSPYLPGRLACATAQHYGIAGCGTLLILDPDEAGLRLFRSFDWNDGLFDVTWSENNEHVLITCSGDGSLQLWDTAKAAGPLQVYKEHAQEVYSVDWSQTRGEQLVVSGSWDQTVKLWDPTVGKSLCTFRGHESIIYSTIWSPHIPGCFASASGDQTLRIWDVKAAGVRIVIPAHQAEILSCDWCKYNENLLVTGAVDCSLRGWDLRNVRQPVFELLGHTYAIRRVKFSPFHASVLASCSYDFTVRFWNFSKPDSLLETVEHHTEFTCGLDFSLQSPTQVADCSWDETIKIYDPACLTIPA.

WD repeat units follow at residues 65–96 (DWNDGLFDVTWSENNEHVLITCSGDGSLQLWD), 109–141 (EHAQEVYSVDWSQTRGEQLVVSGSWDQTVKLWD), 153–184 (GHESIIYSTIWSPHIPGCFASASGDQTLRIWD), 196–227 (AHQAEILSCDWCKYNENLLVTGAVDCSLRGWD), 240–271 (GHTYAIRRVKFSPFHASVLASCSYDFTVRFWN), and 284–315 (HHTEFTCGLDFSLQSPTQVADCSWDETIKIYD).

The protein belongs to the WD repeat peroxin-7 family. As to quaternary structure, interacts with PEX5; interaction only takes place when PEX7 is associated with cargo proteins. Interacts with VWA8. As to expression, ubiquitous. Highest expression in pancreas, skeletal muscle and heart.

It localises to the cytoplasm. The protein localises to the cytosol. Its subcellular location is the peroxisome matrix. In terms of biological role, receptor required for the peroxisomal import of proteins containing a C-terminal PTS2-type peroxisomal targeting signal. Specifically binds to cargo proteins containing a PTS2 peroxisomal targeting signal in the cytosol. Cargo protein-binding triggers interaction with PEX5 and formation of a ternary complex composed of PEX5 and PEX7 along with PTS2-containing cargo proteins, which is tranlocated into peroxisomes by passing through the PEX13-PEX14 docking complex. This Homo sapiens (Human) protein is Peroxisomal targeting signal 2 receptor.